The sequence spans 251 residues: Triosephosphate isomerase (251 aa).

9-11 (NWK) contributes to the substrate binding site. His95 acts as the Electrophile in catalysis. Glu167 functions as the Proton acceptor in the catalytic mechanism. Residues Gly173, Ser213, and 234–235 (GG) contribute to the substrate site. Ser213 carries the post-translational modification Phosphoserine.

The protein belongs to the triosephosphate isomerase family. Homodimer.

The protein resides in the cytoplasm. The catalysed reaction is D-glyceraldehyde 3-phosphate = dihydroxyacetone phosphate. It participates in carbohydrate biosynthesis; gluconeogenesis. It functions in the pathway carbohydrate degradation; glycolysis; D-glyceraldehyde 3-phosphate from glycerone phosphate: step 1/1. Functionally, involved in the gluconeogenesis. Catalyzes stereospecifically the conversion of dihydroxyacetone phosphate (DHAP) to D-glyceraldehyde-3-phosphate (G3P). The polypeptide is Triosephosphate isomerase (Bacillus cereus (strain ATCC 10987 / NRS 248)).